The primary structure comprises 797 residues: Inactive dipeptidyl peptidase 10 (797 aa).

A disordered region spans residues 1–28 (MKQEQQPTPGARATQSQPADQELGSNSP). At 1–34 (MKQEQQPTPGARATQSQPADQELGSNSPPQRNWK) the chain is on the cytoplasmic side. A helical; Signal-anchor for type II membrane protein transmembrane segment spans residues 35-55 (GIAIALLVILVVCSLITMSVI). The Extracellular portion of the chain corresponds to 56-797 (LLTPDELTNS…VLPQEPEEDE (742 aa)). N-linked (GlcNAc...) asparagine glycosylation is found at Asn64, Asn91, Asn112, and Asn120. Tyr139 and Tyr144 each carry phosphotyrosine. 4 N-linked (GlcNAc...) asparagine glycosylation sites follow: Asn258, Asn343, Asn518, and Asn749.

This sequence belongs to the peptidase S9B family. DPPIV subfamily. May form oligomers. Interacts with KCND1 and KCND2. Post-translationally, N-glycosylation is important for cell surface expression, specially at Asn-258, which is crucial. Detected in brain cortex (at protein level). Expressed in the brain, predominantly by neurons and not by glia.

The protein resides in the cell membrane. Its function is as follows. Promotes cell surface expression of the potassium channel KCND2. Modulates the activity and gating characteristics of the potassium channel KCND2. Has no dipeptidyl aminopeptidase activity. The chain is Inactive dipeptidyl peptidase 10 (Dpp10) from Mus musculus (Mouse).